A 327-amino-acid chain; its full sequence is dTDP-4-dehydrorhamnose reductase (327 aa).

The tract at residues 1–22 (MDLINGMGTSPGYWRTPREPGN) is disordered. NADH is bound by residues 43 to 45 (GMV), 69 to 70 (DI), and 91 to 93 (AYT). NADPH-binding positions include 44 to 45 (MV), 69 to 70 (DI), and 91 to 93 (AYT). 132–133 (TD) provides a ligand contact to dTDP-beta-L-rhamnose. Residues Y157 and K161 each coordinate NADH. NADPH contacts are provided by Y157 and K161. Y157 acts as the Proton donor/acceptor in catalysis. W182 serves as a coordination point for dTDP-beta-L-rhamnose. Residues 264 to 276 (PERVRPCGSDRHP) show a composition bias toward basic and acidic residues. Residues 264–292 (PERVRPCGSDRHPRPAPRPSYTVLSSQRS) are disordered.

This sequence belongs to the dTDP-4-dehydrorhamnose reductase family. Requires Mg(2+) as cofactor.

The enzyme catalyses dTDP-beta-L-rhamnose + NADP(+) = dTDP-4-dehydro-beta-L-rhamnose + NADPH + H(+). The protein operates within carbohydrate biosynthesis; dTDP-L-rhamnose biosynthesis. Its function is as follows. Involved in the biosynthesis of the dTDP-L-rhamnose which is a component of the critical linker, D-N-acetylglucosamine-L-rhamnose disaccharide, which connects the galactan region of arabinogalactan to peptidoglycan via a phosphodiester linkage. Catalyzes the reduction of dTDP-6-deoxy-L-lyxo-4-hexulose to yield dTDP-L-rhamnose. In Mycolicibacterium smegmatis (strain ATCC 700084 / mc(2)155) (Mycobacterium smegmatis), this protein is dTDP-4-dehydrorhamnose reductase.